The chain runs to 275 residues: 5'-nucleotidase SurE (275 aa).

Asp-12, Asp-13, Ser-44, and Asn-102 together coordinate a divalent metal cation.

This sequence belongs to the SurE nucleotidase family. Requires a divalent metal cation as cofactor.

The protein resides in the cytoplasm. The enzyme catalyses a ribonucleoside 5'-phosphate + H2O = a ribonucleoside + phosphate. Nucleotidase that shows phosphatase activity on nucleoside 5'-monophosphates. The polypeptide is 5'-nucleotidase SurE (Synechococcus sp. (strain RCC307)).